We begin with the raw amino-acid sequence, 657 residues long: DVHSSDNAHKQHDVNHLLDKIYEPIKDEKLHNTAHTFNPVADTSIYGDDGAAAKTLMQKLNDHRLLEEHHWFSLFNTRQREELAMLFTVLNQCKEWDFLNNNAAFFRERMNEGEFVYALYVSVIHSKLGDGIVLPPLYQITPHMFTNSEVIDKAYSAKMTHKEGTFNMSFTGTQKNREQRVAYFGQDIGMNIHHVTWHMDFPFWWDDSYGYHLDRKGELFFWVHHQLTARFDAERFSNWMDPVDELHWDDIIHEGFAPHASYKYGGEFPTRPDNTHFKNVDGVARVRDMEITENRIRDAIAHGYITATDGHTIDIRQPNGIELLGDIIESSMYSSNPHYPGSLHNTAHGMLGRQGDPHGKFNMPPGVMEHFETATRDPSFFRLHKYMDNIFKEHTDSFPPYTHEDLEFPGVSVDNIAIEGHLTTFFDQFKYSLVNAVDSGENVEDVEIYANVHRLNHEEFTYDIEVRNHNEEDKFATVRIFLCPTEDNNGITLNLDEARWLCLELDKFWTKLGDGKNLIERSSKDSSVTVPDMPSFESLKKQADEAVNGGHDLDLSAYERSCGIPDRMLLPKSKPQGMEFNLYVAVTDGDKDTDGSHGDHDHHGTHAQCGIHGELYPDHRPLGYPLERRIPDDRVFDGVSNIKHALVKIVHDPELRA.

The N-linked (GlcNAc...) asparagine glycan is linked to Asn-167. Cu cation-binding residues include His-194, His-198, His-224, His-344, His-348, and His-384. 2 cysteine pairs are disulfide-bonded: Cys-483/Cys-502 and Cys-562/Cys-609.

The protein belongs to the tyrosinase family. Hemocyanin subfamily. It consists of at least four very similar subunits. In terms of tissue distribution, hemolymph.

Its subcellular location is the secreted. The protein resides in the extracellular space. Hemocyanins are copper-containing oxygen carriers occurring freely dissolved in the hemolymph of many mollusks and arthropods. This chain is Hemocyanin, found in Palinurus vulgaris (European spiny lobster).